Here is a 117-residue protein sequence, read N- to C-terminus: UPF0122 protein Teth514_1714 (117 aa).

It belongs to the UPF0122 family.

Might take part in the signal recognition particle (SRP) pathway. This is inferred from the conservation of its genetic proximity to ftsY/ffh. May be a regulatory protein. The protein is UPF0122 protein Teth514_1714 of Thermoanaerobacter sp. (strain X514).